Reading from the N-terminus, the 562-residue chain is Glutamine--tRNA ligase (562 aa).

A 'HIGH' region motif is present at residues 35–45 (PEPNGYLHIGH). Residues 36–38 (EPN) and 42–48 (HIGHAKS) each bind ATP. 2 residues coordinate L-glutamine: D68 and Y213. Residues T232 and 264 to 265 (RL) contribute to the ATP site. A 'KMSKS' region motif is present at residues 271 to 275 (ITSKR).

The protein belongs to the class-I aminoacyl-tRNA synthetase family. As to quaternary structure, monomer.

The protein resides in the cytoplasm. It carries out the reaction tRNA(Gln) + L-glutamine + ATP = L-glutaminyl-tRNA(Gln) + AMP + diphosphate. The protein is Glutamine--tRNA ligase of Neisseria meningitidis serogroup A / serotype 4A (strain DSM 15465 / Z2491).